Here is a 543-residue protein sequence, read N- to C-terminus: Cobyric acid synthase (543 aa).

A GATase cobBQ-type domain is found at 260–483 (MLDIVLVDLP…LHGVFDADGF (224 aa)). The Nucleophile role is filled by Cys346. Residue His475 is part of the active site.

This sequence belongs to the CobB/CobQ family. CobQ subfamily.

It participates in cofactor biosynthesis; adenosylcobalamin biosynthesis. Functionally, catalyzes amidations at positions B, D, E, and G on adenosylcobyrinic A,C-diamide. NH(2) groups are provided by glutamine, and one molecule of ATP is hydrogenolyzed for each amidation. This chain is Cobyric acid synthase, found in Nitratidesulfovibrio vulgaris (strain ATCC 29579 / DSM 644 / CCUG 34227 / NCIMB 8303 / VKM B-1760 / Hildenborough) (Desulfovibrio vulgaris).